A 107-amino-acid chain; its full sequence is Rhodocoxin (107 aa).

The region spanning 2–106 (PTVTYVHPDG…GLIVRLPEEQ (105 aa)) is the 2Fe-2S ferredoxin-type domain. Positions 40, 46, 49, and 87 each coordinate [2Fe-2S] cluster.

It belongs to the adrenodoxin/putidaredoxin family. [2Fe-2S] cluster serves as cofactor.

In terms of biological role, ferredoxin-type protein which transfers electrons from rhodocoxin reductase to cytochrome CYP116 (ThcB), which is involved in the degradation of thiocarbamate herbicides. This Rhodococcus erythropolis (Arthrobacter picolinophilus) protein is Rhodocoxin (thcC).